A 331-amino-acid polypeptide reads, in one-letter code: Hyaluronidase (331 aa).

2 cysteine pairs are disulfide-bonded: C19/C308 and C185/C197. N79 carries an N-linked (GlcNAc...) asparagine glycan. Residue E109 is the Proton donor of the active site. N-linked (GlcNAc...) asparagine glycosylation is present at N325.

This sequence belongs to the glycosyl hydrolase 56 family. In terms of tissue distribution, expressed by the venom gland.

It is found in the secreted. It catalyses the reaction Random hydrolysis of (1-&gt;4)-linkages between N-acetyl-beta-D-glucosamine and D-glucuronate residues in hyaluronate.. Its function is as follows. Hydrolyzes high molecular weight hyaluronic acid to produce small oligosaccharides. The chain is Hyaluronidase from Dolichovespula maculata (Bald-faced hornet).